The primary structure comprises 108 residues: Nucleoid-associated protein Bmul_1447/BMULJ_01796 (108 aa).

Positions 84 to 108 are disordered; it reads EATSQEKMSGMTSGLPLPPGFKLPF. Residues 85–95 are compositionally biased toward polar residues; that stretch reads ATSQEKMSGMT. Residues 99-108 are compositionally biased toward pro residues; sequence PLPPGFKLPF.

Belongs to the YbaB/EbfC family. As to quaternary structure, homodimer.

The protein resides in the cytoplasm. It localises to the nucleoid. In terms of biological role, binds to DNA and alters its conformation. May be involved in regulation of gene expression, nucleoid organization and DNA protection. This chain is Nucleoid-associated protein Bmul_1447/BMULJ_01796, found in Burkholderia multivorans (strain ATCC 17616 / 249).